Here is a 326-residue protein sequence, read N- to C-terminus: Aspartate carbamoyltransferase catalytic subunit (326 aa).

Carbamoyl phosphate-binding residues include R58 and T59. K86 contacts L-aspartate. Residues R108, H141, and Q144 each contribute to the carbamoyl phosphate site. L-aspartate-binding residues include R181 and R239. Carbamoyl phosphate is bound by residues G280 and P281.

This sequence belongs to the aspartate/ornithine carbamoyltransferase superfamily. ATCase family. As to quaternary structure, heterododecamer (2C3:3R2) of six catalytic PyrB chains organized as two trimers (C3), and six regulatory PyrI chains organized as three dimers (R2).

It carries out the reaction carbamoyl phosphate + L-aspartate = N-carbamoyl-L-aspartate + phosphate + H(+). Its pathway is pyrimidine metabolism; UMP biosynthesis via de novo pathway; (S)-dihydroorotate from bicarbonate: step 2/3. Catalyzes the condensation of carbamoyl phosphate and aspartate to form carbamoyl aspartate and inorganic phosphate, the committed step in the de novo pyrimidine nucleotide biosynthesis pathway. The protein is Aspartate carbamoyltransferase catalytic subunit of Synechococcus sp. (strain JA-2-3B'a(2-13)) (Cyanobacteria bacterium Yellowstone B-Prime).